Reading from the N-terminus, the 334-residue chain is Endochitinase 3 (334 aa).

Residues Met1 to Ala23 form the signal peptide. The Chitin-binding type-1 domain occupies Glu24–Ser65. 4 disulfides stabilise this stretch: Cys26–Cys41, Cys35–Cys47, Cys40–Cys54, and Cys59–Cys63. The interval Pro64–Asp84 is disordered. Residues Gly66–Gly79 are compositionally biased toward pro residues. Pro73, Pro74, and Pro76 each carry 4-hydroxyproline. 3 disulfides stabilise this stretch: Cys106-Cys168, Cys180-Cys188, and Cys287-Cys319. Catalysis depends on Glu150, which acts as the Proton donor. Positions Gly328–Met334 are cleaved as a propeptide — removed in mature form.

It belongs to the glycosyl hydrolase 19 family. Chitinase class I subfamily. Post-translationally, the 4-hydroxyproline residues are not glycosylated in this plant vacuolar protein.

It is found in the vacuole. The catalysed reaction is Random endo-hydrolysis of N-acetyl-beta-D-glucosaminide (1-&gt;4)-beta-linkages in chitin and chitodextrins.. Defense against chitin-containing fungal pathogens. The chain is Endochitinase 3 (CHN14) from Nicotiana tabacum (Common tobacco).